Consider the following 313-residue polypeptide: Protein MFI (313 aa).

Can homodimerize. Interacts with MFF; the interaction inhibits MFF interaction with DNM1L. As to expression, enriched in the pancreatic beta cell and the testis and is expressed at low levels in other tissues tested.

It localises to the cytoplasm. It is found in the cytosol. The protein resides in the mitochondrion outer membrane. Acts as an inhibitor of mitochondrial fission. Interacts with MFF and prevents DNM1L recruitment to mitochondria, promoting a more fused mitochondrial network. This chain is Protein MFI, found in Homo sapiens (Human).